A 322-amino-acid polypeptide reads, in one-letter code: MSSLGGGSQDAGGSSSSSTNGSGGSGSSGPKAGAADKSAVVAAATPASVADDTPPPERRNKSGIISEPLNKSLRRSRPLSHYSSFGSSGGSGGGSMMGGESADKATAAAAAASLLANGHDLAAAMAVDKSNPTSKHKSGAVASLLSKAERATELAAEGQLTLQQFAQSTEMLKRVVQEHLPLMSEAGAGLPDMEAVAGAEALNGQSDFPYLGAFPINPGLFIMTPAGVFLAESALHMAGLAEYPMQGELASAISSGKKKRKRCGMCAPCRRRINCEQCSSCRNRKTGHQICKFRKCEELKKKPSAALEKVMLPTGAAFRWFQ.

A compositionally biased stretch (gly residues) spans M1–D10. Residues M1–E100 form a disordered region. Low complexity-rich tracts occupy residues A11–N20 and S28–D52. T53 is modified (phosphothreonine). The span at S87 to M97 shows a compositional bias: gly residues. The segment at G256–E297 adopts a CXXC-type zinc-finger fold. The Nuclear localization signal signature appears at K257–R262. Residues C263, C266, C269, C275, C278, C281, C291, and C296 each contribute to the Zn(2+) site.

As to quaternary structure, interacts with DVL1. Interacts with RBPJ.

It is found in the nucleus. The protein localises to the cytoplasm. May indirectly participate in activation of the NF-kappa-B and MAPK pathways. Acts as a mediator of BMP4-mediated modulation of canonical Wnt signaling activity in neural stem cells. Required for DNA damage-induced ATM phosphorylation, p53 activation and cell cycle arrest. Involved in myelopoiesis. Binds to the oxygen responsive element of COX4I2 and represses its transcription under hypoxia conditions (4% oxygen), as well as normoxia conditions (20% oxygen). May repress COX4I2 transactivation induced by CHCHD2 and RBPJ. Binds preferentially to DNA containing cytidine-phosphate-guanosine (CpG) dinucleotides over CpH (H=A, T, and C), hemimethylated-CpG and hemimethylated-hydroxymethyl-CpG. This chain is CXXC-type zinc finger protein 5 (CXXC5), found in Pongo abelii (Sumatran orangutan).